The sequence spans 421 residues: UDP-N-acetylglucosamine 1-carboxyvinyltransferase 1 (421 aa).

22–23 is a binding site for phosphoenolpyruvate; the sequence is KN. Arg-94 provides a ligand contact to UDP-N-acetyl-alpha-D-glucosamine. Cys-118 functions as the Proton donor in the catalytic mechanism. Cys-118 is modified (2-(S-cysteinyl)pyruvic acid O-phosphothioketal). Residues 123–127, Asp-310, and Val-332 each bind UDP-N-acetyl-alpha-D-glucosamine; that span reads RPIEL.

It belongs to the EPSP synthase family. MurA subfamily.

It localises to the cytoplasm. It catalyses the reaction phosphoenolpyruvate + UDP-N-acetyl-alpha-D-glucosamine = UDP-N-acetyl-3-O-(1-carboxyvinyl)-alpha-D-glucosamine + phosphate. Its pathway is cell wall biogenesis; peptidoglycan biosynthesis. Cell wall formation. Adds enolpyruvyl to UDP-N-acetylglucosamine. This chain is UDP-N-acetylglucosamine 1-carboxyvinyltransferase 1, found in Clostridium perfringens (strain 13 / Type A).